An 84-amino-acid chain; its full sequence is Small ribosomal subunit protein bS16 (84 aa).

This sequence belongs to the bacterial ribosomal protein bS16 family.

The polypeptide is Small ribosomal subunit protein bS16 (Paraburkholderia phytofirmans (strain DSM 17436 / LMG 22146 / PsJN) (Burkholderia phytofirmans)).